Here is a 207-residue protein sequence, read N- to C-terminus: Vexin (207 aa).

A disordered region spans residues 65-104; that stretch reads RDTGDRRWLQTGRLQTARPPGAHPTKTPSRPVGISEPKTS.

The protein belongs to the vexin family.

It is found in the cell membrane. The protein resides in the nucleus. Required for neurogenesis in the neural plate and retina. Strongly cooperates with neural bHLH factors to promote neurogenesis. The chain is Vexin from Mus musculus (Mouse).